The sequence spans 962 residues: Phosphatidylinositol 3,4,5-trisphosphate 3-phosphatase and dual-specificity protein phosphatase daf-18 (962 aa).

The tract at residues 1 to 37 is disordered; it reads MVTPPPDVPSTSTRSMARDLQENPNRQPGEPRVSEPY. Residues 58–230 form the Phosphatase tensin-type domain; it reads CRTEYQNIDL…YYYHKLRERE (173 aa). The active-site Phosphocysteine intermediate is the cysteine 169. The 297-residue stretch at 234–530 folds into the C2 tensin-type domain; sequence LPLRMQLIGV…GMKLHVVLRC (297 aa). Disordered stretches follow at residues 382–416 and 689–731; these read DTSIGRKNGMRRNETPMRKIDPETGNEFESPWQIV and IENT…RLPD. The segment covering 392 to 403 has biased composition (basic and acidic residues); sequence RRNETPMRKIDP. Residues 692–704 show a composition bias toward low complexity; it reads TGPSTSGSSAPGT. Over residues 706–720 the composition is skewed to basic and acidic residues; sequence KKTEASQSDKVKPAT.

This sequence belongs to the PTEN phosphatase protein family. In terms of assembly, interacts (via C-terminus) with vab-1 (via kinase domain); the interaction is independent of vab-1 kinase activity. Interacts with arr-1 and mpz-1; the interaction may inhibit daf-18. Interacts (via C-terminus) with daf-2 (via kinase domain). In terms of processing, phosphorylated by vab-1 on tyrosine residues which may promote daf-18 degradation. In terms of tissue distribution, expressed in embryo, larvae and in adult germline (at protein level). Expressed at equal levels in the 6 vulva precursor cells (VPCs) of L2 larvae and in the descendant cells of the induced VPCs (at protein level). Expressed in the uterus (at protein level). Expressed in the Z2/Z3 germline precursors, oocytes, several amphid neurons and weakly in the nerve cord (at protein level).

It localises to the perikaryon. The protein localises to the cell membrane. It is found in the cell projection. The protein resides in the axon. Its subcellular location is the dendrite. It localises to the cytoplasm. The protein localises to the nucleus. It carries out the reaction a 1,2-diacyl-sn-glycero-3-phospho-(1D-myo-inositol-3,4,5-trisphosphate) + H2O = a 1,2-diacyl-sn-glycero-3-phospho-(1D-myo-inositol-4,5-bisphosphate) + phosphate. The catalysed reaction is O-phospho-L-seryl-[protein] + H2O = L-seryl-[protein] + phosphate. It catalyses the reaction O-phospho-L-threonyl-[protein] + H2O = L-threonyl-[protein] + phosphate. The enzyme catalyses O-phospho-L-tyrosyl-[protein] + H2O = L-tyrosyl-[protein] + phosphate. It carries out the reaction 1,2-dioctanoyl-sn-glycero-3-phospho-(1D-myo-inositol-3,4,5-trisphosphate) + H2O = 1,2-dioctanoyl-sn-glycero-3-phospho-(1D-myo-inositol-4,5-bisphosphate) + phosphate. The catalysed reaction is 1,2-dihexadecanoyl-sn-glycero-3-phospho-(1D-myo-inositol-3,4,5-trisphosphate) + H2O = 1,2-dihexadecanoyl-sn-glycero-3-phospho-(1D-myo-inositol-4,5-bisphosphate) + phosphate. Its function is as follows. Acts as a dual-specificity protein phosphatase, dephosphorylating tyrosine-, serine- and threonine-phosphorylated proteins. Also acts as a lipid phosphatase, removing the phosphate in the D3 position of the inositol ring from phosphatidylinositol 3,4,5-trisphosphate. By dephosphorylating PtdIns(3,4,5)P3 antagonizes PtdIns(3,4,5)P3 production by age-1/PI3K and thus, negatively regulates daf-2-mediated processes including dauer formation, longevity, fat metabolism, chemotaxis towards salt, thermotolerance and axon guidance. Similarly, promotes apoptosis during embryonic development by suppressing the recruitment of the prosurvival kinases akt-1/2 to the plasma membrane. In addition, regulates Z2/Z3 germline precursor cell cycle by maintaining them arrested at the G2 stage and by controlling their growth during L1 diapause. After sperm depletion in larvae and adult hermaphrodites, promotes germline stem cell quiescence and oocyte accumulation. By dephosphorylating ephrin-like receptor vab-1 on tyrosine residues, negatively regulates oocyte maturation downstream of vab-1 and upstream of mpk-1, independently of daf-2. Plays a role in postembryonic muscle arm extensions. Required for neurite outgrowth during AIY interneuron embryonic development. Mainly independently of daf-2, negatively regulates vulva induction probably by inhibiting mpk-1 phosphorylation. Both lipid and protein phosphatase activities are required for the regulation of vulva induction. Plays a role in gonad and germline development following the L1 diapause. The sequence is that of Phosphatidylinositol 3,4,5-trisphosphate 3-phosphatase and dual-specificity protein phosphatase daf-18 from Caenorhabditis elegans.